The primary structure comprises 840 residues: Homeobox-leucine zipper protein HOX9 (840 aa).

2 disordered regions span residues 1-26 (MAAAVAMRSGSGSDGGGGGYDKAGMD) and 135-160 (NPSLGNDTSCESNVTTPQNPLRDASN). The span at 12–21 (GSDGGGGGYD) shows a compositional bias: gly residues. The homeobox DNA-binding region spans 26–89 (DSGKYVRYTP…NRRCRDKQRK (64 aa)). A coiled-coil region spans residues 86-135 (KQRKEASRLQAVNRKLTAMNKLLMEENERLQKQVSQLVHENAYMKQQLQN). The region spanning 157–385 (DASNPSGLLT…IAQETSGEVV (229 aa)) is the START domain.

This sequence belongs to the HD-ZIP homeobox family. Class III subfamily. As to expression, expressed in seedlings, roots, stems, leaf sheaths and blades and panicles.

The protein resides in the nucleus. Functionally, probable transcription factor. The chain is Homeobox-leucine zipper protein HOX9 (HOX9) from Oryza sativa subsp. indica (Rice).